The following is a 212-amino-acid chain: Small ribosomal subunit protein eS1 (212 aa).

It belongs to the eukaryotic ribosomal protein eS1 family.

This chain is Small ribosomal subunit protein eS1, found in Haloquadratum walsbyi (strain DSM 16790 / HBSQ001).